The following is a 570-amino-acid chain: Periplasmic trehalase (570 aa).

An N-terminal signal peptide occupies residues 1–34 (MIPPEIRRSVLLQKAIKLALAGTLLTFASFSATA). Residues arginine 159, 166–167 (WD), asparagine 203, 212–214 (RSQ), 284–286 (RPE), and glycine 317 contribute to the substrate site. Active-site proton donor/acceptor residues include aspartate 319 and glutamate 503. Glutamate 518 contributes to the substrate binding site. The interval 544 to 570 (KPCDSVPSTRPASLSATPTKTPSAATQ) is disordered. Residues 554–570 (PASLSATPTKTPSAATQ) are compositionally biased toward low complexity.

The protein belongs to the glycosyl hydrolase 37 family. In terms of assembly, monomer.

The protein resides in the periplasm. It catalyses the reaction alpha,alpha-trehalose + H2O = alpha-D-glucose + beta-D-glucose. In terms of biological role, provides the cells with the ability to utilize trehalose at high osmolarity by splitting it into glucose molecules that can subsequently be taken up by the phosphotransferase-mediated uptake system. The polypeptide is Periplasmic trehalase (Salmonella choleraesuis (strain SC-B67)).